The primary structure comprises 58 residues: Large ribosomal subunit protein uL30 (58 aa).

This sequence belongs to the universal ribosomal protein uL30 family. As to quaternary structure, part of the 50S ribosomal subunit.

The polypeptide is Large ribosomal subunit protein uL30 (Trichlorobacter lovleyi (strain ATCC BAA-1151 / DSM 17278 / SZ) (Geobacter lovleyi)).